The chain runs to 365 residues: Pyridoxal reductase, chloroplastic (365 aa).

The transit peptide at 1 to 15 directs the protein to the chloroplast; sequence MALTLSTTKTFTNIN. Tyr94 acts as the Proton donor in catalysis.

Belongs to the aldo/keto reductase family. As to quaternary structure, monomer. In terms of tissue distribution, expressed in cotyledons, embryos, flowers, shoots, roots and seeds.

It is found in the plastid. The protein localises to the chloroplast. It catalyses the reaction pyridoxine + NADP(+) = pyridoxal + NADPH + H(+). Its pathway is cofactor degradation; B6 vitamer degradation; pyridoxal from pyridoxine (dehydrogenase route): step 1/1. Its function is as follows. Catalyzes the reduction of pyridoxal (PL) with NADPH and oxidation of pyridoxine (PN) with NADP(+). Involved in the PLP salvage pathway. In Arabidopsis thaliana (Mouse-ear cress), this protein is Pyridoxal reductase, chloroplastic (PLR1).